The primary structure comprises 407 residues: MKVVSCNYRVKNVKDIETPTYTILTNNITPEYINLELLRKIDKKFIINCSLLEIYNNLDVFEKVKEYFSSNKTNEVSGHYLHEFCDFQDSYRYLNIRNVLVDDYNINVHKFISLKYDNSTAVFSIDDYIKCLKIFEPDIFCIPCEEIKINEQVGKKKKNRIINLMNEFLEKVQIIKNTNLSNSLCILSIPCTVDIDTVITETINKYDSIIDGILLSGLGYDESNETRTNAFKNILNILPNNKLKFIQLSNGNPIEILHAIYHGIDVIEPNFPYYLAKNGKAINMNLKMDNLQDGNEYNLQDKNNDNIYDINLLDFKNDVNFIIDLNNPKYVLDHSTITCNSPRKESKSYIHHLLKCHELTAHVILTYHNLYIYRSFFQEIQLHIKENNFLSYINWFIEKNELNKKEE.

This sequence belongs to the queuine tRNA-ribosyltransferase family.

The polypeptide is Queuine tRNA-ribosyltransferase-like protein (Plasmodium falciparum (isolate 3D7)).